Consider the following 214-residue polypeptide: GTP cyclohydrolase 1 (214 aa).

Zn(2+) is bound by residues Cys108, His111, and Cys179.

The protein belongs to the GTP cyclohydrolase I family. As to quaternary structure, toroid-shaped homodecamer, composed of two pentamers of five dimers.

The catalysed reaction is GTP + H2O = 7,8-dihydroneopterin 3'-triphosphate + formate + H(+). Its pathway is cofactor biosynthesis; 7,8-dihydroneopterin triphosphate biosynthesis; 7,8-dihydroneopterin triphosphate from GTP: step 1/1. This is GTP cyclohydrolase 1 from Shewanella loihica (strain ATCC BAA-1088 / PV-4).